A 591-amino-acid polypeptide reads, in one-letter code: Cytidine monophosphate-N-acetylneuraminic acid hydroxylase (591 aa).

In terms of domain architecture, Rieske spans 12 to 110 (LEAEDVRNLK…AVLSETDGSL (99 aa)). [2Fe-2S] cluster is bound by residues cysteine 52, histidine 54, cysteine 73, and histidine 76.

Belongs to the CMP-Neu5Ac hydroxylase family. [2Fe-2S] cluster is required as a cofactor.

It is found in the cytoplasm. The enzyme catalyses CMP-N-acetyl-beta-neuraminate + 2 Fe(II)-[cytochrome b5] + O2 + 2 H(+) = CMP-N-glycoloyl-beta-neuraminate + 2 Fe(III)-[cytochrome b5] + H2O. It functions in the pathway amino-sugar metabolism; N-acetylneuraminate metabolism. Its function is as follows. Sialic acids are components of carbohydrate chains of glycoconjugates and are involved in cell-cell recognition and cell-pathogen interactions. Catalyzes the conversion of CMP-N-acetylneuraminic acid (CMP-Neu5Ac) into its hydroxylated derivative CMP-N-glycolylneuraminic acid (CMP-Neu5Gc), a sialic acid abundantly expressed at the surface of many cells. In Danio rerio (Zebrafish), this protein is Cytidine monophosphate-N-acetylneuraminic acid hydroxylase (cmah).